A 335-amino-acid chain; its full sequence is Spliceosome-associated protein 49 (335 aa).

RRM domains are found at residues 13-84 (IYLG…PIRV) and 101-172 (LFVG…PITV). The interval 204-223 (VTPQSTLPPGFSPATPAPTS) is disordered.

The protein belongs to the SF3B4 family.

The protein localises to the nucleus. This Schizosaccharomyces pombe (strain 972 / ATCC 24843) (Fission yeast) protein is Spliceosome-associated protein 49 (sap49).